The sequence spans 164 residues: Disulfide bond formation protein B (164 aa).

At 1-9 (MTLPSARTC) the chain is on the cytoplasmic side. A helical membrane pass occupies residues 10-26 (FLLGFLFCAALLAAALY). Over 27–44 (FQFSGGLEPCPLCISQRI) the chain is Periplasmic. A disulfide bridge connects residues Cys36 and Cys39. Residues 45–61 (MVLAVALVFLAAAIHHP) traverse the membrane as a helical segment. Over 62–68 (ASLGIRA) the chain is Cytoplasmic. A helical membrane pass occupies residues 69-85 (YALLGTAVALGGASISG). At 86–142 (RHVWLLHLPPEEVPECGPGLSYMFRNFPLGDTLKAMLSGTGDCAKVDWTFLGLSMPA) the chain is on the periplasmic side. A disulfide bridge connects residues Cys101 and Cys128. The chain crosses the membrane as a helical span at residues 143–161 (WVLICFLGLGAFSLLQWWN). Topologically, residues 162-164 (AER) are cytoplasmic.

It belongs to the DsbB family.

The protein localises to the cell inner membrane. Required for disulfide bond formation in some periplasmic proteins. Acts by oxidizing the DsbA protein. The protein is Disulfide bond formation protein B of Methylococcus capsulatus (strain ATCC 33009 / NCIMB 11132 / Bath).